The chain runs to 298 residues: N-acetylmuramic acid 6-phosphate etherase (298 aa).

One can recognise an SIS domain in the interval 55 to 218; the sequence is IHAQVSGGGR…STGLMIKSGK (164 aa). Residue E83 is the Proton donor of the active site. E114 is an active-site residue.

Belongs to the GCKR-like family. MurNAc-6-P etherase subfamily. Homodimer.

The enzyme catalyses N-acetyl-D-muramate 6-phosphate + H2O = N-acetyl-D-glucosamine 6-phosphate + (R)-lactate. It participates in amino-sugar metabolism; 1,6-anhydro-N-acetylmuramate degradation. Its pathway is amino-sugar metabolism; N-acetylmuramate degradation. The protein operates within cell wall biogenesis; peptidoglycan recycling. Functionally, specifically catalyzes the cleavage of the D-lactyl ether substituent of MurNAc 6-phosphate, producing GlcNAc 6-phosphate and D-lactate. Together with AnmK, is also required for the utilization of anhydro-N-acetylmuramic acid (anhMurNAc) either imported from the medium or derived from its own cell wall murein, and thus plays a role in cell wall recycling. This Escherichia coli O17:K52:H18 (strain UMN026 / ExPEC) protein is N-acetylmuramic acid 6-phosphate etherase.